The chain runs to 662 residues: DNA ligase (662 aa).

NAD(+) contacts are provided by residues 32–36 (DAEYD), 75–76 (SL), and E106. The N6-AMP-lysine intermediate role is filled by K108. Residues R129, E164, K271, and K295 each coordinate NAD(+). The Zn(2+) site is built by C389, C392, C407, and C413. In terms of domain architecture, BRCT spans 580–662 (SSNSVLNNKI…HKVISLGVFK (83 aa)).

The protein belongs to the NAD-dependent DNA ligase family. LigA subfamily. Requires Mg(2+) as cofactor. It depends on Mn(2+) as a cofactor.

The catalysed reaction is NAD(+) + (deoxyribonucleotide)n-3'-hydroxyl + 5'-phospho-(deoxyribonucleotide)m = (deoxyribonucleotide)n+m + AMP + beta-nicotinamide D-nucleotide.. In terms of biological role, DNA ligase that catalyzes the formation of phosphodiester linkages between 5'-phosphoryl and 3'-hydroxyl groups in double-stranded DNA using NAD as a coenzyme and as the energy source for the reaction. It is essential for DNA replication and repair of damaged DNA. This chain is DNA ligase, found in Wolbachia pipientis wMel.